Consider the following 472-residue polypeptide: Glutamate--tRNA ligase (472 aa).

A 'HIGH' region motif is present at residues 9–19 (PSPTGYLHVGG). Zn(2+)-binding residues include cysteine 98, cysteine 100, cysteine 125, and histidine 127. The 'KMSKS' region signature appears at 237–241 (KLSKR). Lysine 240 serves as a coordination point for ATP.

The protein belongs to the class-I aminoacyl-tRNA synthetase family. Glutamate--tRNA ligase type 1 subfamily. In terms of assembly, monomer. Zn(2+) serves as cofactor.

The protein resides in the cytoplasm. It catalyses the reaction tRNA(Glu) + L-glutamate + ATP = L-glutamyl-tRNA(Glu) + AMP + diphosphate. Catalyzes the attachment of glutamate to tRNA(Glu) in a two-step reaction: glutamate is first activated by ATP to form Glu-AMP and then transferred to the acceptor end of tRNA(Glu). The chain is Glutamate--tRNA ligase from Klebsiella pneumoniae subsp. pneumoniae (strain ATCC 700721 / MGH 78578).